Here is a 519-residue protein sequence, read N- to C-terminus: Glutamate--cysteine ligase (519 aa).

It belongs to the glutamate--cysteine ligase type 1 family. Type 1 subfamily.

The catalysed reaction is L-cysteine + L-glutamate + ATP = gamma-L-glutamyl-L-cysteine + ADP + phosphate + H(+). It functions in the pathway sulfur metabolism; glutathione biosynthesis; glutathione from L-cysteine and L-glutamate: step 1/2. The polypeptide is Glutamate--cysteine ligase (Yersinia pseudotuberculosis serotype I (strain IP32953)).